Consider the following 227-residue polypeptide: 3,4-dihydroxy-2-butanone 4-phosphate synthase (227 aa).

D-ribulose 5-phosphate contacts are provided by residues 45–46 (RE), Asp-50, 158–162 (RRGHT), and Glu-182. Glu-46 contributes to the Mg(2+) binding site. Mg(2+) is bound at residue His-161.

It belongs to the DHBP synthase family. Homodimer. Requires Mg(2+) as cofactor. It depends on Mn(2+) as a cofactor.

It carries out the reaction D-ribulose 5-phosphate = (2S)-2-hydroxy-3-oxobutyl phosphate + formate + H(+). It participates in cofactor biosynthesis; riboflavin biosynthesis; 2-hydroxy-3-oxobutyl phosphate from D-ribulose 5-phosphate: step 1/1. Its function is as follows. Catalyzes the conversion of D-ribulose 5-phosphate to formate and 3,4-dihydroxy-2-butanone 4-phosphate. This is 3,4-dihydroxy-2-butanone 4-phosphate synthase from Ralstonia nicotianae (strain ATCC BAA-1114 / GMI1000) (Ralstonia solanacearum).